Consider the following 601-residue polypeptide: Proline--tRNA ligase (601 aa).

The protein belongs to the class-II aminoacyl-tRNA synthetase family. ProS type 1 subfamily. Homodimer.

The protein localises to the cytoplasm. It carries out the reaction tRNA(Pro) + L-proline + ATP = L-prolyl-tRNA(Pro) + AMP + diphosphate. In terms of biological role, catalyzes the attachment of proline to tRNA(Pro) in a two-step reaction: proline is first activated by ATP to form Pro-AMP and then transferred to the acceptor end of tRNA(Pro). As ProRS can inadvertently accommodate and process non-cognate amino acids such as alanine and cysteine, to avoid such errors it has two additional distinct editing activities against alanine. One activity is designated as 'pretransfer' editing and involves the tRNA(Pro)-independent hydrolysis of activated Ala-AMP. The other activity is designated 'posttransfer' editing and involves deacylation of mischarged Ala-tRNA(Pro). The misacylated Cys-tRNA(Pro) is not edited by ProRS. This chain is Proline--tRNA ligase, found in Trichodesmium erythraeum (strain IMS101).